The following is a 360-amino-acid chain: Phenylalanine--tRNA ligase alpha subunit (360 aa).

Glu260 lines the Mg(2+) pocket.

This sequence belongs to the class-II aminoacyl-tRNA synthetase family. Phe-tRNA synthetase alpha subunit type 1 subfamily. As to quaternary structure, tetramer of two alpha and two beta subunits. Mg(2+) serves as cofactor.

It is found in the cytoplasm. It catalyses the reaction tRNA(Phe) + L-phenylalanine + ATP = L-phenylalanyl-tRNA(Phe) + AMP + diphosphate + H(+). The chain is Phenylalanine--tRNA ligase alpha subunit from Rhizobium etli (strain CIAT 652).